The following is a 225-amino-acid chain: NAD(P)H-quinone oxidoreductase subunit K, chloroplastic (225 aa).

[4Fe-4S] cluster contacts are provided by Cys-43, Cys-44, Cys-108, and Cys-139.

The protein belongs to the complex I 20 kDa subunit family. As to quaternary structure, NDH is composed of at least 16 different subunits, 5 of which are encoded in the nucleus. The cofactor is [4Fe-4S] cluster.

The protein localises to the plastid. It is found in the chloroplast thylakoid membrane. The catalysed reaction is a plastoquinone + NADH + (n+1) H(+)(in) = a plastoquinol + NAD(+) + n H(+)(out). It catalyses the reaction a plastoquinone + NADPH + (n+1) H(+)(in) = a plastoquinol + NADP(+) + n H(+)(out). In terms of biological role, NDH shuttles electrons from NAD(P)H:plastoquinone, via FMN and iron-sulfur (Fe-S) centers, to quinones in the photosynthetic chain and possibly in a chloroplast respiratory chain. The immediate electron acceptor for the enzyme in this species is believed to be plastoquinone. Couples the redox reaction to proton translocation, and thus conserves the redox energy in a proton gradient. This chain is NAD(P)H-quinone oxidoreductase subunit K, chloroplastic, found in Barbarea verna (Land cress).